The chain runs to 223 residues: Triosephosphate isomerase (223 aa).

10–12 (NFK) is a binding site for substrate. Residue H94 is the Electrophile of the active site. The active-site Proton acceptor is the E142. Residues I147, G182, and 203 to 204 (AS) each bind substrate.

Belongs to the triosephosphate isomerase family. As to quaternary structure, homotetramer; dimer of dimers.

It is found in the cytoplasm. The enzyme catalyses D-glyceraldehyde 3-phosphate = dihydroxyacetone phosphate. The protein operates within carbohydrate biosynthesis; gluconeogenesis. It participates in carbohydrate degradation; glycolysis; D-glyceraldehyde 3-phosphate from glycerone phosphate: step 1/1. Functionally, involved in the gluconeogenesis. Catalyzes stereospecifically the conversion of dihydroxyacetone phosphate (DHAP) to D-glyceraldehyde-3-phosphate (G3P). The protein is Triosephosphate isomerase of Archaeoglobus fulgidus (strain ATCC 49558 / DSM 4304 / JCM 9628 / NBRC 100126 / VC-16).